A 306-amino-acid chain; its full sequence is MATH domain and coiled-coil domain-containing protein At3g29580 (306 aa).

An MATH domain is found at 6–132; it reads DNKFTWVIKN…NGEIKIVVEF (127 aa). Positions 253-298 form a coiled coil; the sequence is FKLDWLEKKLNEVLEKKEKEESYETRMREIEEEMKDLKAKALDVGA.

This is MATH domain and coiled-coil domain-containing protein At3g29580 from Arabidopsis thaliana (Mouse-ear cress).